The sequence spans 433 residues: Alpha-(1,3)-fucosyltransferase 4 (433 aa).

Topologically, residues 1 to 52 (MAPARQELQHESRCRPSRTVDAWRAAVATRGRHMETPGYRRRTRCGGWGLPR) are cytoplasmic. A helical; Signal-anchor for type II membrane protein transmembrane segment spans residues 53–74 (SVSSLAAVGLLCTALTTFICWG). The Lumenal segment spans residues 75–433 (QLPPLPWASP…IHNLADWFQR (359 aa)). 2 N-linked (GlcNAc...) asparagine glycosylation sites follow: N117 and N218.

It belongs to the glycosyltransferase 10 family. Highest expression in stomach and colon. It is also expressed in the lung, testis, uterus, small intestine and to a lesser extent in spleen, and ovary. Present in trace amounts in brain, thymus, heart, smooth muscle, kidney and bone marrow. Not found in liver, salivary gland and pancreas.

It is found in the golgi apparatus. The protein localises to the golgi stack membrane. It catalyses the reaction a beta-D-galactosyl-(1-&gt;4)-N-acetyl-beta-D-glucosaminyl derivative + GDP-beta-L-fucose = a beta-D-galactosyl-(1-&gt;4)-[alpha-L-fucosyl-(1-&gt;3)]-N-acetyl-beta-D-glucosaminyl derivative + GDP + H(+). It carries out the reaction an N-acetyl-alpha-neuraminyl-(2-&gt;3)-beta-D-galactosyl-(1-&gt;4)-N-acetyl-beta-D-glucosaminyl derivative + GDP-beta-L-fucose = an alpha-Neu5Ac-(2-&gt;3)-beta-D-Gal-(1-&gt;4)-[alpha-L-Fuc-(1-&gt;3)]-beta-D-GlcNAc derivative + GDP + H(+). The catalysed reaction is an alpha-Neu5Ac-(2-&gt;3)-beta-D-Gal-(1-&gt;4)-beta-D-GlcNAc-(1-&gt;3)-beta-D-Gal-(1-&gt;4)-beta-D-GlcNAc derivative + GDP-beta-L-fucose = an alpha-Neu5Ac-(2-&gt;3)-beta-D-Gal-(1-&gt;4)-beta-D-GlcNAc-(1-&gt;3)-beta-D-Gal-(1-&gt;4)-[alpha-L-Fuc-(1-&gt;3)]-beta-D-GlcNAc derivative + GDP + H(+). The enzyme catalyses an alpha-Neu5Ac-(2-&gt;3)-beta-D-Gal-(1-&gt;4)-beta-D-GlcNAc6S derivative + GDP-beta-L-fucose = an alpha-Neu5Ac-(2-&gt;3)-beta-D-Gal-(1-&gt;4)-[alpha-L-Fuc-(1-&gt;3)]-beta-D-GlcNAc6S derivative + GDP + H(+). The protein operates within protein modification; protein glycosylation. Its function is as follows. Catalyzes alpha(1-&gt;3) linkage of fucosyl moiety transferred from GDP-beta-L-fucose to N-acetyl glucosamine (GlcNAc) within type 2 lactosamine (LacNAc, Gal-beta(1-&gt;4)GlcNAc) glycan attached to N- or O-linked glycoproteins. Robustly fucosylates nonsialylated distal LacNAc unit of the polylactosamine chain to form Lewis X antigen (CD15), a glycan determinant known to mediate important cellular functions in development and immunity. Fucosylates with lower efficiency sialylated LacNAc acceptors to form sialyl Lewis X and 6-sulfo sialyl Lewis X determinants that serve as recognition epitopes for C-type lectins. Together with FUT7 contributes to SELE, SELL and SELP selectin ligand biosynthesis and selectin-dependent lymphocyte homing, leukocyte migration and blood leukocyte homeostasis. In a cell type specific manner, may also fucosylate the internal LacNAc unit of the polylactosamine chain to form VIM-2 antigen that serves as recognition epitope for SELE. The polypeptide is Alpha-(1,3)-fucosyltransferase 4 (Fut4) (Mus musculus (Mouse)).